The following is a 355-amino-acid chain: WD repeat domain phosphoinositide-interacting protein 4 (355 aa).

WD repeat units lie at residues 2–40 and 185–225; these read SQQR…EKGH and AHQS…QLVE. Residues 226–229 carry the L/FRRG motif motif; that stretch reads LRRG. The WD 3 repeat unit spans residues 230–269; that stretch reads TDPATLYCINFSHDSSFLCSSSDKGTVHIFALKDTKLNRR.

The protein belongs to the WD repeat PROPPIN family.

Its subcellular location is the preautophagosomal structure. Its function is as follows. Component of the autophagy machinery that controls the major intracellular degradation process by which cytoplasmic materials are packaged into autophagosomes and delivered to lysosomes for degradation. Binds phosphatidylinositol 3-phosphate (PtdIns3P). This chain is WD repeat domain phosphoinositide-interacting protein 4 (wdr45), found in Xenopus laevis (African clawed frog).